Here is a 310-residue protein sequence, read N- to C-terminus: Ribosomal RNA small subunit methyltransferase H (310 aa).

Residues 33 to 35, aspartate 53, phenylalanine 79, aspartate 100, and glutamine 107 each bind S-adenosyl-L-methionine; that span reads AGH.

It belongs to the methyltransferase superfamily. RsmH family.

It localises to the cytoplasm. It catalyses the reaction cytidine(1402) in 16S rRNA + S-adenosyl-L-methionine = N(4)-methylcytidine(1402) in 16S rRNA + S-adenosyl-L-homocysteine + H(+). In terms of biological role, specifically methylates the N4 position of cytidine in position 1402 (C1402) of 16S rRNA. The polypeptide is Ribosomal RNA small subunit methyltransferase H (Desulfitobacterium hafniense (strain DSM 10664 / DCB-2)).